A 495-amino-acid chain; its full sequence is ATP synthase subunit beta, chloroplastic (495 aa).

Position 172-179 (172-179 (GGAGVGKT)) interacts with ATP.

The protein belongs to the ATPase alpha/beta chains family. F-type ATPases have 2 components, CF(1) - the catalytic core - and CF(0) - the membrane proton channel. CF(1) has five subunits: alpha(3), beta(3), gamma(1), delta(1), epsilon(1). CF(0) has four main subunits: a(1), b(1), b'(1) and c(9-12).

It is found in the plastid. It localises to the chloroplast thylakoid membrane. It catalyses the reaction ATP + H2O + 4 H(+)(in) = ADP + phosphate + 5 H(+)(out). In terms of biological role, produces ATP from ADP in the presence of a proton gradient across the membrane. The catalytic sites are hosted primarily by the beta subunits. In Brimeura amethystina (Spanish hyacinth), this protein is ATP synthase subunit beta, chloroplastic.